A 211-amino-acid polypeptide reads, in one-letter code: Protein-L-isoaspartate O-methyltransferase (211 aa).

Residue S62 is part of the active site.

Belongs to the methyltransferase superfamily. L-isoaspartyl/D-aspartyl protein methyltransferase family.

It localises to the cytoplasm. The catalysed reaction is [protein]-L-isoaspartate + S-adenosyl-L-methionine = [protein]-L-isoaspartate alpha-methyl ester + S-adenosyl-L-homocysteine. Functionally, catalyzes the methyl esterification of L-isoaspartyl residues in peptides and proteins that result from spontaneous decomposition of normal L-aspartyl and L-asparaginyl residues. It plays a role in the repair and/or degradation of damaged proteins. The sequence is that of Protein-L-isoaspartate O-methyltransferase from Shewanella woodyi (strain ATCC 51908 / MS32).